The chain runs to 299 residues: Tetrahydromethanopterin S-methyltransferase subunit E (299 aa).

6 consecutive transmembrane segments (helical) span residues 57–77 (AISG…SVAW), 80–100 (INAG…AAIV), 133–153 (IGPI…AAYL), 158–178 (LGNP…VGAI), 237–257 (GLCF…GNII), and 261–281 (LVTK…AAMI).

It belongs to the MtrE family. In terms of assembly, the complex is composed of 8 subunits; MtrA, MtrB, MtrC, MtrD, MtrE, MtrF, MtrG and MtrH.

Its subcellular location is the cell membrane. The catalysed reaction is 5-methyl-5,6,7,8-tetrahydromethanopterin + coenzyme M + 2 Na(+)(in) = 5,6,7,8-tetrahydromethanopterin + methyl-coenzyme M + 2 Na(+)(out). It participates in one-carbon metabolism; methanogenesis from CO(2); methyl-coenzyme M from 5,10-methylene-5,6,7,8-tetrahydromethanopterin: step 2/2. Functionally, part of a complex that catalyzes the formation of methyl-coenzyme M and tetrahydromethanopterin from coenzyme M and methyl-tetrahydromethanopterin. This is an energy-conserving, sodium-ion translocating step. This Methanococcus vannielii (strain ATCC 35089 / DSM 1224 / JCM 13029 / OCM 148 / SB) protein is Tetrahydromethanopterin S-methyltransferase subunit E.